Consider the following 348-residue polypeptide: Phenylalanine--tRNA ligase alpha subunit (348 aa).

Glu-262 contributes to the Mg(2+) binding site.

It belongs to the class-II aminoacyl-tRNA synthetase family. Phe-tRNA synthetase alpha subunit type 1 subfamily. As to quaternary structure, tetramer of two alpha and two beta subunits. The cofactor is Mg(2+).

Its subcellular location is the cytoplasm. The enzyme catalyses tRNA(Phe) + L-phenylalanine + ATP = L-phenylalanyl-tRNA(Phe) + AMP + diphosphate + H(+). The polypeptide is Phenylalanine--tRNA ligase alpha subunit (Streptococcus pneumoniae (strain 70585)).